Consider the following 328-residue polypeptide: Malate dehydrogenase (328 aa).

Residue 11 to 17 (GAAGQIG) participates in NAD(+) binding. The substrate site is built by Arg94 and Arg100. Residues Asn107, Gln114, and 131 to 133 (VGN) contribute to the NAD(+) site. The substrate site is built by Asn133 and Arg164. His189 functions as the Proton acceptor in the catalytic mechanism.

The protein belongs to the LDH/MDH superfamily. MDH type 2 family.

The catalysed reaction is (S)-malate + NAD(+) = oxaloacetate + NADH + H(+). Catalyzes the reversible oxidation of malate to oxaloacetate. The sequence is that of Malate dehydrogenase from Acinetobacter baumannii (strain AB0057).